The primary structure comprises 209 residues: Kynurenine formamidase (209 aa).

Phe18 contacts substrate. His48, His52, and Asp54 together coordinate Zn(2+). Residue His58 is the Proton donor/acceptor of the active site. Positions 160 and 172 each coordinate Zn(2+).

This sequence belongs to the Cyclase 1 superfamily. KynB family. In terms of assembly, homodimer. Requires Zn(2+) as cofactor.

The enzyme catalyses N-formyl-L-kynurenine + H2O = L-kynurenine + formate + H(+). It participates in amino-acid degradation; L-tryptophan degradation via kynurenine pathway; L-kynurenine from L-tryptophan: step 2/2. Its function is as follows. Catalyzes the hydrolysis of N-formyl-L-kynurenine to L-kynurenine, the second step in the kynurenine pathway of tryptophan degradation. In Bordetella avium (strain 197N), this protein is Kynurenine formamidase.